Here is a 219-residue protein sequence, read N- to C-terminus: 3-dehydroquinate dehydratase (219 aa).

Residues Ser10, 29–31 (EVR), and Arg59 each bind 3-dehydroquinate. His116 (proton donor/acceptor) is an active-site residue. The active-site Schiff-base intermediate with substrate is the Lys142. 3-dehydroquinate-binding residues include Arg180 and Gln203.

The protein belongs to the type-I 3-dehydroquinase family. As to quaternary structure, homodimer.

It catalyses the reaction 3-dehydroquinate = 3-dehydroshikimate + H2O. It participates in metabolic intermediate biosynthesis; chorismate biosynthesis; chorismate from D-erythrose 4-phosphate and phosphoenolpyruvate: step 3/7. Functionally, involved in the third step of the chorismate pathway, which leads to the biosynthesis of aromatic amino acids. Catalyzes the cis-dehydration of 3-dehydroquinate (DHQ) and introduces the first double bond of the aromatic ring to yield 3-dehydroshikimate. The polypeptide is 3-dehydroquinate dehydratase (Methanocella arvoryzae (strain DSM 22066 / NBRC 105507 / MRE50)).